Reading from the N-terminus, the 98-residue chain is NADH-ubiquinone oxidoreductase chain 4L (98 aa).

Helical transmembrane passes span 1 to 21, 29 to 49, and 61 to 81; these read MSIT…GMFT, SLLC…IVSL, and VILL…LVMV.

It belongs to the complex I subunit 4L family. Core subunit of respiratory chain NADH dehydrogenase (Complex I) which is composed of 45 different subunits.

The protein localises to the mitochondrion inner membrane. The catalysed reaction is a ubiquinone + NADH + 5 H(+)(in) = a ubiquinol + NAD(+) + 4 H(+)(out). Its function is as follows. Core subunit of the mitochondrial membrane respiratory chain NADH dehydrogenase (Complex I) which catalyzes electron transfer from NADH through the respiratory chain, using ubiquinone as an electron acceptor. Part of the enzyme membrane arm which is embedded in the lipid bilayer and involved in proton translocation. The sequence is that of NADH-ubiquinone oxidoreductase chain 4L (MT-ND4L) from Ochotona collaris (Collared pika).